The chain runs to 94 residues: Co-chaperonin GroES (94 aa).

The protein belongs to the GroES chaperonin family. In terms of assembly, heptamer of 7 subunits arranged in a ring. Interacts with the chaperonin GroEL.

It is found in the cytoplasm. Its function is as follows. Together with the chaperonin GroEL, plays an essential role in assisting protein folding. The GroEL-GroES system forms a nano-cage that allows encapsulation of the non-native substrate proteins and provides a physical environment optimized to promote and accelerate protein folding. GroES binds to the apical surface of the GroEL ring, thereby capping the opening of the GroEL channel. This chain is Co-chaperonin GroES, found in Geobacillus stearothermophilus (Bacillus stearothermophilus).